The following is a 435-amino-acid chain: GTPase Der (435 aa).

2 consecutive EngA-type G domains span residues 4–167 and 175–350; these read KIVA…SKND and TKIA…QSLS. GTP-binding positions include 10 to 17, 57 to 61, 119 to 122, 181 to 188, 228 to 232, and 293 to 296; these read GRPNVGKS, DTGGI, NKYD, DTAGI, and NKWD. The 85-residue stretch at 351 to 435 folds into the KH-like domain; that stretch reads VKVKTYVLNE…PINLIFRERK (85 aa).

The protein belongs to the TRAFAC class TrmE-Era-EngA-EngB-Septin-like GTPase superfamily. EngA (Der) GTPase family. In terms of assembly, associates with the 50S ribosomal subunit.

Functionally, GTPase that plays an essential role in the late steps of ribosome biogenesis. The sequence is that of GTPase Der from Mycoplasma mycoides subsp. mycoides SC (strain CCUG 32753 / NCTC 10114 / PG1).